The chain runs to 255 residues: Acetylglutamate kinase (255 aa).

Residues 40-41 (GG), R62, and N153 contribute to the substrate site.

This sequence belongs to the acetylglutamate kinase family. ArgB subfamily.

It is found in the cytoplasm. It carries out the reaction N-acetyl-L-glutamate + ATP = N-acetyl-L-glutamyl 5-phosphate + ADP. Its pathway is amino-acid biosynthesis; L-arginine biosynthesis; N(2)-acetyl-L-ornithine from L-glutamate: step 2/4. Its function is as follows. Catalyzes the ATP-dependent phosphorylation of N-acetyl-L-glutamate. This chain is Acetylglutamate kinase, found in Bacillus mycoides (strain KBAB4) (Bacillus weihenstephanensis).